A 218-amino-acid polypeptide reads, in one-letter code: Pyridoxine/pyridoxamine 5'-phosphate oxidase (218 aa).

Substrate contacts are provided by residues 14–17 (RREY) and Lys-72. FMN is bound by residues 67 to 72 (RIVLLK), 82 to 83 (YT), Arg-88, Lys-89, and Gln-111. Positions 129, 133, and 137 each coordinate substrate. FMN-binding positions include 146-147 (QS) and Trp-191. Substrate is bound at residue 197–199 (RLH). FMN is bound at residue Arg-201.

Belongs to the pyridoxamine 5'-phosphate oxidase family. As to quaternary structure, homodimer. It depends on FMN as a cofactor.

The catalysed reaction is pyridoxamine 5'-phosphate + O2 + H2O = pyridoxal 5'-phosphate + H2O2 + NH4(+). It carries out the reaction pyridoxine 5'-phosphate + O2 = pyridoxal 5'-phosphate + H2O2. It functions in the pathway cofactor metabolism; pyridoxal 5'-phosphate salvage; pyridoxal 5'-phosphate from pyridoxamine 5'-phosphate: step 1/1. It participates in cofactor metabolism; pyridoxal 5'-phosphate salvage; pyridoxal 5'-phosphate from pyridoxine 5'-phosphate: step 1/1. Functionally, catalyzes the oxidation of either pyridoxine 5'-phosphate (PNP) or pyridoxamine 5'-phosphate (PMP) into pyridoxal 5'-phosphate (PLP). This is Pyridoxine/pyridoxamine 5'-phosphate oxidase from Escherichia coli (strain SMS-3-5 / SECEC).